The primary structure comprises 459 residues: Cysteine--tRNA ligase (459 aa).

Residue cysteine 29 coordinates Zn(2+). Residues 31–41 (MTVYDLCHLGH) carry the 'HIGH' region motif. The Zn(2+) site is built by cysteine 213, histidine 238, and glutamate 242. The 'KMSKS' region signature appears at 270 to 274 (KMSKS). ATP is bound at residue lysine 273.

Belongs to the class-I aminoacyl-tRNA synthetase family. Monomer. Zn(2+) serves as cofactor.

It is found in the cytoplasm. The enzyme catalyses tRNA(Cys) + L-cysteine + ATP = L-cysteinyl-tRNA(Cys) + AMP + diphosphate. The chain is Cysteine--tRNA ligase from Variovorax paradoxus (strain S110).